The sequence spans 138 residues: Basic phospholipase A2 homolog Tpu-K49a (138 aa).

The signal sequence occupies residues 1–16 (MRTLWIMAVLLVGVEG). Cystine bridges form between Cys-42/Cys-131, Cys-44/Cys-60, Cys-59/Cys-111, Cys-65/Cys-138, Cys-66/Cys-104, and Cys-91/Cys-102. The interval 121–133 (KKERINTKIFCKK) is important for membrane-damaging activities in eukaryotes and bacteria; heparin-binding.

As to quaternary structure, monomer. Expressed by the venom gland.

The protein resides in the secreted. Its function is as follows. Snake venom phospholipase A2 homolog that lacks catalytic activity. Induces local edema a few hours after injection in the hind foot. Is myotoxic. A model of myotoxic mechanism has been proposed: an apo Lys49-PLA2 is activated by the entrance of a hydrophobic molecule (e.g. fatty acid) at the hydrophobic channel of the protein leading to a reorientation of a monomer. This reorientation causes a transition between 'inactive' to 'active' states, causing alignment of C-terminal and membrane-docking sites (MDoS) side-by-side and putting the membrane-disruption sites (MDiS) in the same plane, exposed to solvent and in a symmetric position for both monomers. The MDoS region stabilizes the toxin on membrane by the interaction of charged residues with phospholipid head groups. Subsequently, the MDiS region destabilizes the membrane with penetration of hydrophobic residues. This insertion causes a disorganization of the membrane, allowing an uncontrolled influx of ions (i.e. calcium and sodium), and eventually triggering irreversible intracellular alterations and cell death. This is Basic phospholipase A2 homolog Tpu-K49a from Craspedocephalus puniceus (Flat-nosed pitviper).